Consider the following 413-residue polypeptide: Serine/threonine-protein phosphatase 2A 55 kDa regulatory subunit B beta isoform (413 aa).

WD repeat units lie at residues 1 to 31 (EFNH…KNQV), 57 to 98 (EIEE…KRPE), 141 to 179 (AHTY…QSFN), and 190 to 230 (ELTE…LCDR). A Phosphoserine modification is found at Ser-245. 3 WD repeats span residues 249–287 (EIIS…RPIE), 304–345 (ENDC…DVTL), and 380–412 (DFSK…QDKV). Residue Tyr-265 is modified to Phosphotyrosine. Thr-268 is modified (phosphothreonine).

This sequence belongs to the phosphatase 2A regulatory subunit B family. PP2A consists of a common heterodimeric core enzyme, composed of a 36 kDa catalytic subunit (subunit C) and a 65 kDa constant regulatory subunit (PR65 or subunit A), that associates with a variety of regulatory subunits. Proteins that associate with the core dimer include three families of regulatory subunits B (the R2/B/PR55/B55, R3/B''/PR72/PR130/PR59 and R5/B'/B56 families), the 48 kDa variable regulatory subunit, viral proteins, and cell signaling molecules. Interacts with TOMM22. Interacts with IER5 (via N- and C-terminal regions). As to expression, brain.

It is found in the cytoplasm. Its subcellular location is the cytoskeleton. The protein resides in the membrane. In terms of biological role, the B regulatory subunit might modulate substrate selectivity and catalytic activity, and might also direct the localization of the catalytic enzyme to a particular subcellular compartment. This is Serine/threonine-protein phosphatase 2A 55 kDa regulatory subunit B beta isoform (PPP2R2B) from Oryctolagus cuniculus (Rabbit).